The following is a 228-amino-acid chain: uncharacterized protein (228 aa).

The N-terminal stretch at 1–15 (MKQKYLFIASMALAG) is a signal peptide. A lipid anchor (N-palmitoyl cysteine) is attached at Cys-16. Cys-16 carries S-diacylglycerol cysteine lipidation.

It to P.multocida PM0015.

Its subcellular location is the cell membrane. This is an uncharacterized protein from Pasteurella multocida (strain Pm70).